Reading from the N-terminus, the 470-residue chain is Argininosuccinate lyase (470 aa).

This sequence belongs to the lyase 1 family. Argininosuccinate lyase subfamily.

Its subcellular location is the cytoplasm. The catalysed reaction is 2-(N(omega)-L-arginino)succinate = fumarate + L-arginine. Its pathway is amino-acid biosynthesis; L-arginine biosynthesis; L-arginine from L-ornithine and carbamoyl phosphate: step 3/3. This Prochlorococcus marinus (strain MIT 9303) protein is Argininosuccinate lyase.